A 116-amino-acid chain; its full sequence is Large ribosomal subunit protein uL23 (116 aa).

The protein belongs to the universal ribosomal protein uL23 family. In terms of assembly, part of the 50S ribosomal subunit. Contacts protein L29, and trigger factor when it is bound to the ribosome.

Functionally, one of the early assembly proteins it binds 23S rRNA. One of the proteins that surrounds the polypeptide exit tunnel on the outside of the ribosome. Forms the main docking site for trigger factor binding to the ribosome. This chain is Large ribosomal subunit protein uL23, found in Psychrobacter sp. (strain PRwf-1).